The following is a 300-amino-acid chain: Acetyl-coenzyme A carboxylase carboxyl transferase subunit beta (300 aa).

Residues 24–293 (LWTNCESCSQ…NAPGAALGGA (270 aa)) form the CoA carboxyltransferase N-terminal domain. Zn(2+)-binding residues include cysteine 28, cysteine 31, cysteine 47, and cysteine 50. Residues 28-50 (CESCSQMILVKDLQKAMNVCPHC) form a C4-type zinc finger.

This sequence belongs to the AccD/PCCB family. In terms of assembly, acetyl-CoA carboxylase is a heterohexamer composed of biotin carboxyl carrier protein (AccB), biotin carboxylase (AccC) and two subunits each of ACCase subunit alpha (AccA) and ACCase subunit beta (AccD). Zn(2+) is required as a cofactor.

Its subcellular location is the cytoplasm. It carries out the reaction N(6)-carboxybiotinyl-L-lysyl-[protein] + acetyl-CoA = N(6)-biotinyl-L-lysyl-[protein] + malonyl-CoA. It functions in the pathway lipid metabolism; malonyl-CoA biosynthesis; malonyl-CoA from acetyl-CoA: step 1/1. Component of the acetyl coenzyme A carboxylase (ACC) complex. Biotin carboxylase (BC) catalyzes the carboxylation of biotin on its carrier protein (BCCP) and then the CO(2) group is transferred by the transcarboxylase to acetyl-CoA to form malonyl-CoA. This Gluconacetobacter diazotrophicus (strain ATCC 49037 / DSM 5601 / CCUG 37298 / CIP 103539 / LMG 7603 / PAl5) protein is Acetyl-coenzyme A carboxylase carboxyl transferase subunit beta.